We begin with the raw amino-acid sequence, 154 residues long: D-aminoacyl-tRNA deacylase (154 aa).

A Gly-cisPro motif, important for rejection of L-amino acids motif is present at residues 142-143 (GP).

It belongs to the DTD family. In terms of assembly, homodimer.

The protein resides in the cytoplasm. It carries out the reaction glycyl-tRNA(Ala) + H2O = tRNA(Ala) + glycine + H(+). The catalysed reaction is a D-aminoacyl-tRNA + H2O = a tRNA + a D-alpha-amino acid + H(+). Functionally, an aminoacyl-tRNA editing enzyme that deacylates mischarged D-aminoacyl-tRNAs. Also deacylates mischarged glycyl-tRNA(Ala), protecting cells against glycine mischarging by AlaRS. Acts via tRNA-based rather than protein-based catalysis; rejects L-amino acids rather than detecting D-amino acids in the active site. By recycling D-aminoacyl-tRNA to D-amino acids and free tRNA molecules, this enzyme counteracts the toxicity associated with the formation of D-aminoacyl-tRNA entities in vivo and helps enforce protein L-homochirality. This is D-aminoacyl-tRNA deacylase from Acidovorax sp. (strain JS42).